Consider the following 379-residue polypeptide: All-trans-retinol dehydrogenase [NAD(+)] ADH4 (379 aa).

T1 is subject to N-acetylthreonine. Zn(2+) is bound by residues C46, H68, C98, C101, C104, C112, and C179. Residues 204–209 (GLGGVG), D228, K233, 297–299 (VGV), and R374 contribute to the NAD(+) site.

Belongs to the zinc-containing alcohol dehydrogenase family. Class-II subfamily. Homodimer. It depends on Zn(2+) as a cofactor.

The protein localises to the cytoplasm. The catalysed reaction is all-trans-retinol + NAD(+) = all-trans-retinal + NADH + H(+). It carries out the reaction 9-cis-retinol + NAD(+) = 9-cis-retinal + NADH + H(+). It catalyses the reaction 20-oxo-(5Z,8Z,11Z,14Z)-eicosatetraenoate + NAD(+) + H2O = (5Z,8Z,11Z,14Z)-eicosatetraenedioate + NADH + 2 H(+). The enzyme catalyses 20-hydroxy-(5Z,8Z,11Z,14Z)-eicosatetraenoate + NAD(+) = 20-oxo-(5Z,8Z,11Z,14Z)-eicosatetraenoate + NADH + H(+). The catalysed reaction is 1,4-benzoquinone + NADH + H(+) = hydroquinone + NAD(+). With respect to regulation, oxidation of 20-HETE is inhibited by low concentrations of N-heptylformamide. Oxidation of 20-HETE is a decreased by 55-65% by either all-trans-retinol or all-trans-retinoic acid. Strongly inhibited by omega-hydroxy fatty acids. Functionally, catalyzes the NAD-dependent oxidation of either all-trans-retinol or 9-cis-retinol. Also oxidizes long chain omega-hydroxy fatty acids, such as 20-HETE, producing both the intermediate aldehyde, 20-oxoarachidonate and the end product, a dicarboxylic acid, (5Z,8Z,11Z,14Z)-eicosatetraenedioate. Also catalyzes the reduction of benzoquinones. The chain is All-trans-retinol dehydrogenase [NAD(+)] ADH4 from Struthio camelus (Common ostrich).